We begin with the raw amino-acid sequence, 344 residues long: Ferrochelatase (344 aa).

The Fe cation site is built by His-196 and Glu-277.

The protein belongs to the ferrochelatase family.

The protein resides in the cytoplasm. The enzyme catalyses heme b + 2 H(+) = protoporphyrin IX + Fe(2+). It participates in porphyrin-containing compound metabolism; protoheme biosynthesis; protoheme from protoporphyrin-IX: step 1/1. In terms of biological role, catalyzes the ferrous insertion into protoporphyrin IX. This Synechococcus sp. (strain JA-2-3B'a(2-13)) (Cyanobacteria bacterium Yellowstone B-Prime) protein is Ferrochelatase.